The chain runs to 135 residues: UPF0738 protein Aflv_2116 (135 aa).

The protein belongs to the UPF0738 family.

In Anoxybacillus flavithermus (strain DSM 21510 / WK1), this protein is UPF0738 protein Aflv_2116.